The primary structure comprises 404 residues: Glycosyltransferase GlyB (404 aa).

The interval 1-267 is GT8 domain; it reads MNTKSIVFNA…ILLRKDIISR (267 aa). Residues 9-14 and 103-104 contribute to the UDP site; these read NADNDY and DS. 3 residues coordinate Mn(2+): aspartate 103, aspartate 105, and histidine 228. 228–233 contacts UDP; that stretch reads HYTGVK.

In the N-terminal section; belongs to the glycosyltransferase 8 family.

In terms of biological role, may be involved in the polymorphic O-glycosylation of the serine-rich repeat protein PsrP. Has equal hydrolytic activity against both UDP-galactose and UDP-glucose; no glycosyltransferase activity has been seen with tested substrates. The polypeptide is Glycosyltransferase GlyB (Streptococcus pneumoniae serotype 4 (strain ATCC BAA-334 / TIGR4)).